A 298-amino-acid chain; its full sequence is MMLSEETSAVRPQKQTRFNGAKLVWMLKGSPLTVTSAVIIVLMLLMMIFSPWLATHDPNAIDLTARLLPPSAAHWFGTDEVGRDLFSRVLVGSQQSILAGLVVVAIAGMIGSLLGCLSGVLGGRADAIIMRIMDIMLSIPSLVLTMALAAALGPSLFNAMLAIAIVRIPFYVRLARGQALVVRQYTYVQAAKTFGASRWHLINWHILRNSLPPLIVQASLDIGSAILMAATLGFIGLGAQQPSAEWGAMVANGRNYVLDQWWYCAFPGAAILLTAVGFNLFGDGIRDLLDPKAGGKQS.

Residues 1–33 lie on the Cytoplasmic side of the membrane; it reads MMLSEETSAVRPQKQTRFNGAKLVWMLKGSPLT. The chain crosses the membrane as a helical span at residues 34 to 54; the sequence is VTSAVIIVLMLLMMIFSPWLA. The Periplasmic portion of the chain corresponds to 55–96; sequence THDPNAIDLTARLLPPSAAHWFGTDEVGRDLFSRVLVGSQQS. A helical membrane pass occupies residues 97–117; sequence ILAGLVVVAIAGMIGSLLGCL. The 186-residue stretch at 97-282 folds into the ABC transmembrane type-1 domain; sequence ILAGLVVVAI…LTAVGFNLFG (186 aa). Residues 118–124 lie on the Cytoplasmic side of the membrane; the sequence is SGVLGGR. 2 consecutive transmembrane segments (helical) span residues 125-145 and 146-166; these read ADAI…LVLT and MALA…IAIV. Over 167 to 217 the chain is Cytoplasmic; sequence RIPFYVRLARGQALVVRQYTYVQAAKTFGASRWHLINWHILRNSLPPLIVQ. A helical transmembrane segment spans residues 218-238; that stretch reads ASLDIGSAILMAATLGFIGLG. Over 239–260 the chain is Periplasmic; sequence AQQPSAEWGAMVANGRNYVLDQ. The chain crosses the membrane as a helical span at residues 261-281; sequence WWYCAFPGAAILLTAVGFNLF. Residues 282 to 298 lie on the Cytoplasmic side of the membrane; the sequence is GDGIRDLLDPKAGGKQS.

It belongs to the binding-protein-dependent transport system permease family. OppBC subfamily. As to quaternary structure, the complex is composed of two ATP-binding proteins (DdpD and DdpF), two transmembrane proteins (DdpB and DdpC) and a solute-binding protein (DdpA).

It is found in the cell inner membrane. Part of the ABC transporter complex DdpABCDF, which is probably involved in D,D-dipeptide transport. Probably responsible for the translocation of the substrate across the membrane. The chain is Probable D,D-dipeptide transport system permease protein DdpC (ddpC) from Escherichia coli (strain K12).